The following is a 282-amino-acid chain: uncharacterized protein (282 aa).

The next 5 membrane-spanning stretches (helical) occupy residues 9–29 (LLKIFVVGVFPCTLFVNAPHG), 43–63 (ISGRVGWVLMELVAPLTFLYA), 123–143 (VFVSAVLFNFLNGMSIGLYLV), 158–178 (YIGMFLWLMGWLGNMYHDNIL), and 232–252 (LAAGPSAEPFWWFFLSEILLM).

This sequence belongs to the steroid 5-alpha reductase family.

The protein resides in the endoplasmic reticulum membrane. This is an uncharacterized protein from Schizosaccharomyces pombe (strain 972 / ATCC 24843) (Fission yeast).